Reading from the N-terminus, the 339-residue chain is tRNA dimethylallyltransferase (339 aa).

An ATP-binding site is contributed by 36–43 (GPTGSGKT). 38–43 (TGSGKT) provides a ligand contact to substrate. The segment at 61–64 (DSMQ) is interaction with substrate tRNA.

Belongs to the IPP transferase family. Monomer. The cofactor is Mg(2+).

It catalyses the reaction adenosine(37) in tRNA + dimethylallyl diphosphate = N(6)-dimethylallyladenosine(37) in tRNA + diphosphate. Its function is as follows. Catalyzes the transfer of a dimethylallyl group onto the adenine at position 37 in tRNAs that read codons beginning with uridine, leading to the formation of N6-(dimethylallyl)adenosine (i(6)A). This chain is tRNA dimethylallyltransferase, found in Chlamydia trachomatis serovar L2 (strain ATCC VR-902B / DSM 19102 / 434/Bu).